The following is a 204-amino-acid chain: Protein C (204 aa).

Residues methionine 1–isoleucine 78 form a disordered region. Residues lysine 10–asparagine 20 show a composition bias toward basic and acidic residues. Low complexity predominate over residues serine 25–proline 34.

This sequence belongs to the respirovirus protein C family.

The chain is Protein C (P/V/C) from Homo sapiens (Human).